The primary structure comprises 499 residues: Probable cytosol aminopeptidase (499 aa).

Mn(2+)-binding residues include K271 and D276. Residue K283 is part of the active site. Mn(2+) is bound by residues D294, D353, and E355. Residue R357 is part of the active site.

Belongs to the peptidase M17 family. Mn(2+) serves as cofactor.

The protein localises to the cytoplasm. It carries out the reaction Release of an N-terminal amino acid, Xaa-|-Yaa-, in which Xaa is preferably Leu, but may be other amino acids including Pro although not Arg or Lys, and Yaa may be Pro. Amino acid amides and methyl esters are also readily hydrolyzed, but rates on arylamides are exceedingly low.. The catalysed reaction is Release of an N-terminal amino acid, preferentially leucine, but not glutamic or aspartic acids.. In terms of biological role, presumably involved in the processing and regular turnover of intracellular proteins. Catalyzes the removal of unsubstituted N-terminal amino acids from various peptides. The polypeptide is Probable cytosol aminopeptidase (Bordetella parapertussis (strain 12822 / ATCC BAA-587 / NCTC 13253)).